We begin with the raw amino-acid sequence, 176 residues long: Conjugal transfer protein TraF (176 aa).

The first 23 residues, 1–23 (MRHRRALLFLTGAAVFVSALTAA), serve as a signal peptide directing secretion.

It belongs to the peptidase S26C family.

The protein resides in the periplasm. Its function is as follows. Involved in conjugal transfer of the plasmid. The chain is Conjugal transfer protein TraF (traF) from Agrobacterium tumefaciens (strain 15955).